The primary structure comprises 172 residues: Large ribosomal subunit protein uL10 (172 aa).

Belongs to the universal ribosomal protein uL10 family. As to quaternary structure, part of the ribosomal stalk of the 50S ribosomal subunit. The N-terminus interacts with L11 and the large rRNA to form the base of the stalk. The C-terminus forms an elongated spine to which L12 dimers bind in a sequential fashion forming a multimeric L10(L12)X complex.

Its function is as follows. Forms part of the ribosomal stalk, playing a central role in the interaction of the ribosome with GTP-bound translation factors. The chain is Large ribosomal subunit protein uL10 from Syntrophotalea carbinolica (strain DSM 2380 / NBRC 103641 / GraBd1) (Pelobacter carbinolicus).